The sequence spans 729 residues: Bromo and FHA domain-containing protein DDB_G0267958 (729 aa).

Residues 46-79 (LPIPNTSNTNPPMNQSSSPTTTTTTPTTTTTPTT) are compositionally biased toward low complexity. The tract at residues 46-83 (LPIPNTSNTNPPMNQSSSPTTTTTTPTTTTTPTTAEPA) is disordered. The 56-residue stretch at 112–167 (LIIGSDTELADIQVVRPGIYPKHVEIIYDKEKKKFYLNPLIDPKDSDNVRLNFVPF) folds into the FHA domain. Low complexity-rich tracts occupy residues 208-221 (IPSN…NTPI), 229-275 (PPSS…ATKT), and 283-306 (PTKT…AVKK). Disordered regions lie at residues 208 to 361 (IPSN…MSCK) and 403 to 442 (SRRP…PKVP). Over residues 310–341 (DDDYGDDYNEEEDDDDEEEEEEEEEEEEEEEV) the composition is skewed to acidic residues. Residues 315–352 (DDYNEEEDDDDEEEEEEEEEEEEEEEVESKQIKVVNSK) are a coiled coil. A compositionally biased stretch (low complexity) spans 406 to 431 (PTAPVTPTKPTSTKKVTTPKKATVVK). A Bromo domain is found at 498–617 (SNEKKEILKC…IELYKALSNS (120 aa)). Residues 659–718 (SKNKEQTVPQEEDEEEEEEEEEEEEEEEEGEEGKEDEEEEEKEEEEGEENEEEEDVEIDD) adopt a coiled-coil conformation. The tract at residues 659–729 (SKNKEQTVPQ…EIDQESDDDQ (71 aa)) is disordered. Residues 668 to 729 (QEEDEEEEEE…EIDQESDDDQ (62 aa)) are compositionally biased toward acidic residues.

The chain is Bromo and FHA domain-containing protein DDB_G0267958 from Dictyostelium discoideum (Social amoeba).